A 235-amino-acid chain; its full sequence is BPI fold-containing family A member 2 (235 aa).

The N-terminal stretch at 1–20 (MFQLGSLVVLCGLLIGNSES) is a signal peptide. Cysteine 161 and cysteine 204 form a disulfide bridge.

This sequence belongs to the BPI/LBP/Plunc superfamily. Plunc family. As to expression, predominates in the parotid glands, present in smaller amounts (1/10) in the submaxillary glands and in the sublingual glands, and at lower amount in the pancreas but undetectable in the liver. Found also in lacrimal gland.

Its subcellular location is the secreted. Has strong antibacterial activity against P.aeruginosa. In Mus musculus (Mouse), this protein is BPI fold-containing family A member 2 (Bpifa2).